A 314-amino-acid polypeptide reads, in one-letter code: Dihydropteroate synthase (314 aa).

One can recognise a Pterin-binding domain in the interval 10–294 (TVICGIINVT…DVASHRMAVE (285 aa)). N17 contacts Mg(2+). Residues D91, N110, D201, K237, and 282–284 (RVH) contribute to the (7,8-dihydropterin-6-yl)methyl diphosphate site.

This sequence belongs to the DHPS family. Homodimer. The cofactor is Mg(2+).

It catalyses the reaction (7,8-dihydropterin-6-yl)methyl diphosphate + 4-aminobenzoate = 7,8-dihydropteroate + diphosphate. It participates in cofactor biosynthesis; tetrahydrofolate biosynthesis; 7,8-dihydrofolate from 2-amino-4-hydroxy-6-hydroxymethyl-7,8-dihydropteridine diphosphate and 4-aminobenzoate: step 1/2. Its activity is regulated as follows. Is potently inhibited by sulfonamides, with Ki values between 25 nM and 850 nM. Its function is as follows. Catalyzes the condensation of para-aminobenzoate (pABA) with 6-hydroxymethyl-7,8-dihydropterin diphosphate (DHPt-PP) to form 7,8-dihydropteroate, the immediate precursor of folate derivatives. Is the target for the sulfonamide group of antimicrobial drugs. Sulfonamide drugs act as pABA analogs, they inhibit the reaction by acting as alternative substrates, leading to a 'dead end' sulfa-pterin product. The polypeptide is Dihydropteroate synthase (sulA) (Streptococcus pneumoniae (strain ATCC BAA-255 / R6)).